The sequence spans 2118 residues: Cilia- and flagella-associated protein 65 (2118 aa).

The helical transmembrane segment at Gly-6–Val-26 threads the bilayer. The MSP domain maps to Phe-615–Pro-736. Disordered stretches follow at residues Ala-1007 to Gly-1029, Ser-1764 to Ala-1909, and Ala-1924 to Arg-1958. Over residues Gly-1825–Asp-1834 the composition is skewed to gly residues. Positions Arg-1840 to Ala-1849 are enriched in low complexity. A compositionally biased stretch (basic residues) spans Ala-1850–His-1859. Low complexity-rich tracts occupy residues Ser-1892–Ala-1902 and Pro-1936–Pro-1949. Positions Ala-2016–Glu-2045 form a coiled coil.

It belongs to the CFAP65 family.

It is found in the cell projection. The protein resides in the cilium. Its subcellular location is the flagellum membrane. The protein localises to the cytoplasm. Functionally, may play a role in flagellar formation and mobility. This Chlamydomonas reinhardtii (Chlamydomonas smithii) protein is Cilia- and flagella-associated protein 65.